The following is a 262-amino-acid chain: Bacteriorhodopsin (262 aa).

A propeptide spanning residues 1–13 (MLELLPTAVEGVS) is cleaved from the precursor. Gln-14 bears the Pyrrolidone carboxylic acid mark. At 14–22 (QAQITGRPE) the chain is on the extracellular side. Residues 23–42 (WIWLALGTALMGLGTLYFLV) traverse the membrane as a helical segment. The Cytoplasmic portion of the chain corresponds to 43 to 56 (KGMGVSDPDAKKFY). A helical membrane pass occupies residues 57 to 75 (AITTLVPAIAFTMYLSMLL). Residues 76 to 92 (GYGLTMVPFGGEQNPIY) lie on the Extracellular side of the membrane. Residues 93-109 (WARYADWLFTTPLLLLD) traverse the membrane as a helical segment. The Cytoplasmic portion of the chain corresponds to 110–120 (LALLVDADQGT). A helical transmembrane segment spans residues 121–140 (ILALVGADGIMIGTGLVGAL). Over 141-147 (TKVYSYR) the chain is Extracellular. A helical transmembrane segment spans residues 148–167 (FVWWAISTAAMLYILYVLFF). At 168 to 185 (GFTSKAESMRPEVASTFK) the chain is on the cytoplasmic side. A helical transmembrane segment spans residues 186 to 204 (VLRNVTVVLWSAYPVVWLI). At 205–216 (GSEGAGIVPLNI) the chain is on the extracellular side. Residues 217–236 (ETLLFMVLDVSAKVGFGLIL) form a helical membrane-spanning segment. Position 229 is an N6-(retinylidene)lysine (Lys-229). The Cytoplasmic portion of the chain corresponds to 237-262 (LRSRAIFGEAEAPEPSAGDGAAATSD).

Homotrimer. Post-translationally, the covalent binding of retinal to the apoprotein, bacterioopsin, generates bacteriorhodopsin.

The protein localises to the cell membrane. Light-driven proton pump. The chain is Bacteriorhodopsin (bop) from Halobacterium salinarum (strain ATCC 700922 / JCM 11081 / NRC-1) (Halobacterium halobium).